A 354-amino-acid chain; its full sequence is Protein RecA (354 aa).

78–85 contacts ATP; the sequence is GPESSGKT.

It belongs to the RecA family.

The protein localises to the cytoplasm. Functionally, can catalyze the hydrolysis of ATP in the presence of single-stranded DNA, the ATP-dependent uptake of single-stranded DNA by duplex DNA, and the ATP-dependent hybridization of homologous single-stranded DNAs. It interacts with LexA causing its activation and leading to its autocatalytic cleavage. This is Protein RecA from Zymomonas mobilis subsp. mobilis (strain ATCC 31821 / ZM4 / CP4).